Consider the following 349-residue polypeptide: uncharacterized protein (349 aa).

Residues 116–135 show a composition bias toward polar residues; that stretch reads HFSQTNPKSTPEPPCTSSSG. Positions 116–148 are disordered; that stretch reads HFSQTNPKSTPEPPCTSSSGAGDCHENLPADGY.

This is an uncharacterized protein from Caenorhabditis elegans.